The sequence spans 221 residues: Octanoyltransferase (221 aa).

The BPL/LPL catalytic domain maps to 40 to 218 (PNLEDVLILL…AFAEVFGLEL (179 aa)). Substrate is bound by residues 82–89 (RGGEVTYH), 149–151 (AIG), and 162–164 (GFA). The active-site Acyl-thioester intermediate is cysteine 180.

This sequence belongs to the LipB family.

Its subcellular location is the cytoplasm. It carries out the reaction octanoyl-[ACP] + L-lysyl-[protein] = N(6)-octanoyl-L-lysyl-[protein] + holo-[ACP] + H(+). It participates in protein modification; protein lipoylation via endogenous pathway; protein N(6)-(lipoyl)lysine from octanoyl-[acyl-carrier-protein]: step 1/2. In terms of biological role, catalyzes the transfer of endogenously produced octanoic acid from octanoyl-acyl-carrier-protein onto the lipoyl domains of lipoate-dependent enzymes. Lipoyl-ACP can also act as a substrate although octanoyl-ACP is likely to be the physiological substrate. The chain is Octanoyltransferase from Nostoc sp. (strain PCC 7120 / SAG 25.82 / UTEX 2576).